A 312-amino-acid polypeptide reads, in one-letter code: Plasminogen activator (312 aa).

Residues 1 to 20 (MKKSSIVATIITILSGSANA) form the signal peptide. The Periplasmic portion of the chain corresponds to 21–31 (ASSQLIPNISP). A beta stranded membrane pass occupies residues 32–40 (DSFTVAAST). Topologically, residues 41-70 (GMLSGKSHEMLYDAETGRKISQLDWKIKNV) are extracellular. A beta stranded transmembrane segment spans residues 71 to 80 (AILKGDISWD). Residues 81-84 (PYSF) lie on the Periplasmic side of the membrane. Residues 85 to 94 (LTLNARGWTS) traverse the membrane as a beta stranded segment. Over 95 to 131 (LASGSGNMDDYDWMNENQSEWTDHSSHPATNVNHANE) the chain is Extracellular. Catalysis depends on residues aspartate 104 and aspartate 106. Residues 132 to 140 (YDLNVKGWL) traverse the membrane as a beta stranded segment. Residues 141 to 145 (LQDEN) are Periplasmic-facing. A beta stranded membrane pass occupies residues 146–154 (YKAGITAGY). The Extracellular segment spans residues 155-194 (QETRFSWTATGGSYSYNNGAYTGNFPKGVRVIGYNQRFSM). A beta stranded transmembrane segment spans residues 195 to 204 (PYIGLAGQYR). The Periplasmic portion of the chain corresponds to 205–207 (IND). Residues 208–216 (FELNALFKF) form a beta stranded membrane-spanning segment. The Extracellular segment spans residues 217–244 (SDWVRAHDNDEHYMRDLTFREKTSGSRY). Catalysis depends on residues aspartate 226 and histidine 228. A beta stranded transmembrane segment spans residues 245–255 (YGTVINAGYYV). At 256–258 (TPN) the chain is on the periplasmic side. Residues 259–267 (AKVFAEFTY) form a beta stranded membrane-spanning segment. Residues 268-301 (SKYDEGKGGTQTIDKNSGDSVSIGGDAAGISNKN) are Extracellular-facing. The beta stranded transmembrane segment at 302–312 (YTVTAGLQYRF) threads the bilayer.

Belongs to the peptidase A26 family.

It is found in the cell outer membrane. The catalysed reaction is Converts human Glu-plasminogen to plasmin by cleaving the 560-Arg-|-Val-561 peptide bond that is also hydrolyzed by the mammalian u-plasminogen activator and t-plasminogen activator. Also cleaves arginyl bonds in other proteins.. With respect to regulation, requires bacterial lipopolysaccharide (LPS) for activation; addition of LPS to inactive protein reactivates it. In the absence of LPS the active site groove is slightly narrower, and peptide substrate binds deep within the active site groove, displacing the nucleophilic water molecule. In the mammalian host activates (cleaves) plasminogen to generate the serine protease plasmin. Plasmin degrades fibrin clots (fibrinolysis) and facilitates bacterial cell migration, enabling rapid dissemination of bacteria from the initial site of infection. Cleaves host plasminogen to generate plasmin and probably also has autocatalytic activity. Fibrinolytic activity prevails at 37 degrees Celsius whereas coagulase expression predominates at lower temperatures (28 degrees Celsius). Cleaves plasminogen; plasminogen cleavage is much higher than coagulase activity. The protein is Plasminogen activator of Yersinia pestis.